The chain runs to 989 residues: Zinc finger SWIM domain-containing protein 4 (989 aa).

Residues 1 to 32 (MEPPAAKRSRGCPAGPEERDAGAGAARGRGRP) form a disordered region. An SWIM-type zinc finger spans residues 139–176 (YHVSISFDRCKITSVSCGCDNRDLFYCAHVVALSLYRI).

The protein is Zinc finger SWIM domain-containing protein 4 (ZSWIM4) of Homo sapiens (Human).